Here is a 315-residue protein sequence, read N- to C-terminus: Calumenin-A (315 aa).

An N-terminal signal peptide occupies residues 1-19 (MEIRPLLMCFALCVVYATS). 6 EF-hand domains span residues 68-103 (ESKN…AQKK), 104-139 (YIYD…TYLD), 151-186 (QMMA…EEYE), 188-223 (MKDI…HEDE), 229-264 (WVAT…ADYD), and 265-300 (HAEA…FVGS). Residues Asp81, Asp83, Asp85, Glu92, Asp117, Asn119, Asp121, Met123, and Glu128 each contribute to the Ca(2+) site. Asn131 is a glycosylation site (N-linked (GlcNAc...) asparagine). Ca(2+) is bound by residues Asp164, Asn166, Asp168, Glu175, Asp201, Asn203, Asp205, Glu212, Asp242, Asn244, Asp246, Lys248, Glu253, Asp278, Asn280, Asp282, Lys284, and Glu289. Residues 312 to 315 (HDEF) carry the Prevents secretion from ER motif.

The protein belongs to the CREC family. As to quaternary structure, interacts with ggcx.

It is found in the endoplasmic reticulum membrane. The protein localises to the golgi apparatus. It localises to the secreted. Its subcellular location is the melanosome. The protein resides in the sarcoplasmic reticulum lumen. Functionally, involved in regulation of vitamin K-dependent carboxylation of multiple N-terminal glutamate residues. Seems to inhibit gamma-carboxylase ggcx. Binds 7 calcium ions with a low affinity. The sequence is that of Calumenin-A (calua) from Danio rerio (Zebrafish).